Consider the following 155-residue polypeptide: Telokin-like protein 20 homolog (155 aa).

The interval 109–155 (KRAVAPPHHEPEPVPAEEGAVADRAEPESGDAPPSPKKQKLDEREQD) is disordered.

The polypeptide is Telokin-like protein 20 homolog (Orgyia pseudotsugata multicapsid polyhedrosis virus (OpMNPV)).